Here is a 349-residue protein sequence, read N- to C-terminus: Anthranilate phosphoribosyltransferase (349 aa).

Residues G82, 85-86 (GD), 92-95 (NVST), 110-118 (KHGNRGVSS), and S122 contribute to the 5-phospho-alpha-D-ribose 1-diphosphate site. An anthranilate-binding site is contributed by G82. S94 contacts Mg(2+). N113 contributes to the anthranilate binding site. R168 is an anthranilate binding site. Residues D227 and E228 each coordinate Mg(2+).

It belongs to the anthranilate phosphoribosyltransferase family. Homodimer. It depends on Mg(2+) as a cofactor.

The enzyme catalyses N-(5-phospho-beta-D-ribosyl)anthranilate + diphosphate = 5-phospho-alpha-D-ribose 1-diphosphate + anthranilate. It participates in amino-acid biosynthesis; L-tryptophan biosynthesis; L-tryptophan from chorismate: step 2/5. Its function is as follows. Catalyzes the transfer of the phosphoribosyl group of 5-phosphorylribose-1-pyrophosphate (PRPP) to anthranilate to yield N-(5'-phosphoribosyl)-anthranilate (PRA). The chain is Anthranilate phosphoribosyltransferase from Acinetobacter baylyi (strain ATCC 33305 / BD413 / ADP1).